Consider the following 204-residue polypeptide: Signal peptidase I (204 aa).

The Cytoplasmic portion of the chain corresponds to 1–10 (MNLFKNFLKE). A helical membrane pass occupies residues 11–30 (WGLFLLILSLLALSRIFFWS). Residues 31–204 (NVRVEGHSMD…FWPITRIGTF (174 aa)) lie on the Extracellular side of the membrane. Active-site residues include S38 and K76.

The protein belongs to the peptidase S26 family.

The protein resides in the cell membrane. It catalyses the reaction Cleavage of hydrophobic, N-terminal signal or leader sequences from secreted and periplasmic proteins.. In Streptococcus pneumoniae (strain ATCC BAA-255 / R6), this protein is Signal peptidase I (lepB).